A 161-amino-acid chain; its full sequence is Putative defense protein 2 (161 aa).

The first 11 residues, 1–11 (LSWSALALTSA), serve as a signal peptide directing secretion. Residues 12–161 (YPTGAPTSAC…SAPVKILSHH (150 aa)) enclose the Reelin domain. A disulfide bridge connects residues Cys-21 and Cys-98. Asn-91 carries N-linked (GlcNAc...) asparagine glycosylation.

This sequence belongs to the insect defense protein family.

The protein localises to the secreted. In terms of biological role, may have antimicrobial activity. The polypeptide is Putative defense protein 2 (Antheraea mylitta (Tasar silkworm)).